The primary structure comprises 116 residues: MRVKGGTVTRARRKKWLKLAKGYWGHKSIGYKVAKQAVVKSWTYAFRDRKQVKRNFRKLWISRINAAVRPLGMSYSQFINGLKKANVKINRKMLSELAIREMKTFEMLVSISKSSK.

This sequence belongs to the bacterial ribosomal protein bL20 family.

Binds directly to 23S ribosomal RNA and is necessary for the in vitro assembly process of the 50S ribosomal subunit. It is not involved in the protein synthesizing functions of that subunit. The polypeptide is Large ribosomal subunit protein bL20 (Mycoplasmopsis pulmonis (strain UAB CTIP) (Mycoplasma pulmonis)).